The following is a 63-amino-acid chain: Large ribosomal subunit protein uL29 (63 aa).

Belongs to the universal ribosomal protein uL29 family.

The polypeptide is Large ribosomal subunit protein uL29 (Erwinia tasmaniensis (strain DSM 17950 / CFBP 7177 / CIP 109463 / NCPPB 4357 / Et1/99)).